The sequence spans 106 residues: UPF0473 protein SSU98_0068 (106 aa).

The protein belongs to the UPF0473 family.

This is UPF0473 protein SSU98_0068 from Streptococcus suis (strain 98HAH33).